The primary structure comprises 270 residues: Small ribosomal subunit protein eS1 (270 aa).

2 disordered regions span residues 1–20 (MAVG…SKKK) and 238–270 (GGGK…QESV).

It belongs to the eukaryotic ribosomal protein eS1 family. As to quaternary structure, component of the small ribosomal subunit. Mature ribosomes consist of a small (40S) and a large (60S) subunit. The 40S subunit contains about 33 different proteins and 1 molecule of RNA (18S). The 60S subunit contains about 49 different proteins and 3 molecules of RNA (28S, 5.8S and 5S).

The protein localises to the cytoplasm. The protein is Small ribosomal subunit protein eS1 of Culex quinquefasciatus (Southern house mosquito).